Reading from the N-terminus, the 582-residue chain is 15-cis-phytoene desaturase, chloroplastic/chromoplastic (582 aa).

The transit peptide at 1-93 (MNLLGSISTG…ELENTINFLE (93 aa)) directs the protein to the chloroplast and chromoplast. Residues alanine 121, 140–141 (EA), lysine 148, 165–166 (HI), and tyrosine 171 each bind FAD. Substrate is bound at residue arginine 306. Aspartate 537 contacts FAD. Residue alanine 545 participates in substrate binding. Methionine 547 is a binding site for FAD.

It belongs to the carotenoid/retinoid oxidoreductase family. As to quaternary structure, homotetramer. FAD is required as a cofactor. As to expression, expressed in flower buds and lips. Lower expression in leaves and roots.

Its subcellular location is the plastid. The protein localises to the chloroplast. The protein resides in the chromoplast. It localises to the membrane. It catalyses the reaction 2 a plastoquinone + 15-cis-phytoene = 9,9',15-tri-cis-zeta-carotene + 2 a plastoquinol. It participates in carotenoid biosynthesis; lycopene biosynthesis. In terms of biological role, converts phytoene into zeta-carotene via the intermediary of phytofluene by the symmetrical introduction of two double bonds at the C-11 and C-11' positions of phytoene with a concomitant isomerization of two neighboring double bonds at the C9 and C9' positions from trans to cis. The sequence is that of 15-cis-phytoene desaturase, chloroplastic/chromoplastic (PDS) from Oncidium hybrid cultivar (Orchid).